We begin with the raw amino-acid sequence, 423 residues long: Serine--tRNA ligase (423 aa).

231 to 233 contributes to the L-serine binding site; it reads TAE. 262–264 serves as a coordination point for ATP; the sequence is RSE. Residue Glu-285 participates in L-serine binding. 349-352 is an ATP binding site; sequence EISS. Ser-384 contributes to the L-serine binding site.

This sequence belongs to the class-II aminoacyl-tRNA synthetase family. Type-1 seryl-tRNA synthetase subfamily. In terms of assembly, homodimer. The tRNA molecule binds across the dimer.

Its subcellular location is the cytoplasm. It catalyses the reaction tRNA(Ser) + L-serine + ATP = L-seryl-tRNA(Ser) + AMP + diphosphate + H(+). The catalysed reaction is tRNA(Sec) + L-serine + ATP = L-seryl-tRNA(Sec) + AMP + diphosphate + H(+). Its pathway is aminoacyl-tRNA biosynthesis; selenocysteinyl-tRNA(Sec) biosynthesis; L-seryl-tRNA(Sec) from L-serine and tRNA(Sec): step 1/1. Functionally, catalyzes the attachment of serine to tRNA(Ser). Is also able to aminoacylate tRNA(Sec) with serine, to form the misacylated tRNA L-seryl-tRNA(Sec), which will be further converted into selenocysteinyl-tRNA(Sec). This chain is Serine--tRNA ligase, found in Lactococcus lactis subsp. cremoris (strain SK11).